The primary structure comprises 294 residues: Ribosomal RNA small subunit methyltransferase A (294 aa).

The S-adenosyl-L-methionine site is built by N29, V31, G56, E77, D107, and N126.

The protein belongs to the class I-like SAM-binding methyltransferase superfamily. rRNA adenine N(6)-methyltransferase family. RsmA subfamily.

The protein resides in the cytoplasm. It carries out the reaction adenosine(1518)/adenosine(1519) in 16S rRNA + 4 S-adenosyl-L-methionine = N(6)-dimethyladenosine(1518)/N(6)-dimethyladenosine(1519) in 16S rRNA + 4 S-adenosyl-L-homocysteine + 4 H(+). Functionally, specifically dimethylates two adjacent adenosines (A1518 and A1519) in the loop of a conserved hairpin near the 3'-end of 16S rRNA in the 30S particle. May play a critical role in biogenesis of 30S subunits. This chain is Ribosomal RNA small subunit methyltransferase A, found in Mycobacterium sp. (strain MCS).